A 230-amino-acid chain; its full sequence is RNA chaperone ProQ (230 aa).

A compositionally biased stretch (basic and acidic residues) spans 105–125 (EAKARVQAQREQHQAKKREAG). Residues 105 to 182 (EAKARVQAQR…EQRKPVTDTT (78 aa)) are disordered. The span at 154–167 (PSRPQAARPASAPR) shows a compositional bias: low complexity. The segment covering 168 to 178 (AESRVEQRKPV) has biased composition (basic and acidic residues).

It belongs to the ProQ family.

It localises to the cytoplasm. In terms of biological role, RNA chaperone with significant RNA binding, RNA strand exchange and RNA duplexing activities. May regulate ProP activity through an RNA-based, post-transcriptional mechanism. The chain is RNA chaperone ProQ from Erwinia tasmaniensis (strain DSM 17950 / CFBP 7177 / CIP 109463 / NCPPB 4357 / Et1/99).